The primary structure comprises 387 residues: 3-hydroxy-D-aspartate aldolase (387 aa).

Lys-62 bears the N6-(pyridoxal phosphate)lysine mark. Residues Gln-85, Thr-238, 256 to 257, and Tyr-265 each bind pyridoxal 5'-phosphate; that span reads GS. Mg(2+)-binding residues include His-355 and Asp-357.

It belongs to the DSD1 family. Homodimer. It depends on pyridoxal 5'-phosphate as a cofactor. Mg(2+) is required as a cofactor.

The enzyme catalyses (3S)-3-hydroxy-D-aspartate = glyoxylate + glycine. It carries out the reaction (3R)-3-hydroxy-D-aspartate = glyoxylate + glycine. Catalyzes the condensation of glyoxylate and glycine into (2R,3S)-beta-hydroxyaspartate ((3S)-3-hydroxy-D-aspartate). Is essential for the growth of P.denitrificans in the presence of glycolate and glyoxylate since it functions in glyoxylate assimilation via the beta-hydroxyaspartate cycle (BHAC). Is also able to catalyze the reverse reaction in vitro, i.e. the cleavage of (3S)-3-hydroxy-D-aspartate, and that of D-threonine to a lesser extent. The chain is 3-hydroxy-D-aspartate aldolase from Paracoccus denitrificans (strain Pd 1222).